The following is a 468-amino-acid chain: Interleukin-9 receptor (468 aa).

Positions 1-37 are cleaved as a signal peptide; that stretch reads MALGRCIAEGWTLERVAVKQVSWFLIYSWVCSGVCRG. The Extracellular portion of the chain corresponds to 38–270; that stretch reads VSVPEQGGGG…GLLVPRWQWS (233 aa). Asn-116 and Asn-155 each carry an N-linked (GlcNAc...) asparagine glycan. A Fibronectin type-III domain is found at 148 to 256; it reads PPSDLQSNVS…WSQPVSFPSP (109 aa). Residues 244-248 carry the WSXWS motif motif; it reads WSEWS. The chain crosses the membrane as a helical span at residues 271 to 291; the sequence is ASILVVVPIFLLLTGFVHLLF. Topologically, residues 292-468 are cytoplasmic; sequence KLSPRLKRIF…PVALPVSSRA (177 aa). A Box 1 motif motif is present at residues 301-309; the sequence is FYQNIPSPE. The interval 407–426 is disordered; the sequence is PQEDWAPLGSARPPPPDSDS.

It belongs to the type I cytokine receptor family. Type 4 subfamily. As to quaternary structure, interacts with IL9.

The protein resides in the cell membrane. Its subcellular location is the secreted. Plays an important role in the immune response against parasites by acting as a receptor of IL9. The sequence is that of Interleukin-9 receptor (Il9r) from Mus musculus (Mouse).